Reading from the N-terminus, the 249-residue chain is Putative TrmH family tRNA/rRNA methyltransferase (249 aa).

S-adenosyl-L-methionine-binding residues include Gly-196, Ile-216, and Leu-225.

Belongs to the class IV-like SAM-binding methyltransferase superfamily. RNA methyltransferase TrmH family.

The protein is Putative TrmH family tRNA/rRNA methyltransferase of Staphylococcus saprophyticus subsp. saprophyticus (strain ATCC 15305 / DSM 20229 / NCIMB 8711 / NCTC 7292 / S-41).